The chain runs to 230 residues: Large ribosomal subunit protein uL1 (230 aa).

The protein belongs to the universal ribosomal protein uL1 family. As to quaternary structure, part of the 50S ribosomal subunit.

In terms of biological role, binds directly to 23S rRNA. The L1 stalk is quite mobile in the ribosome, and is involved in E site tRNA release. Protein L1 is also a translational repressor protein, it controls the translation of the L11 operon by binding to its mRNA. The sequence is that of Large ribosomal subunit protein uL1 from Desulfitobacterium hafniense (strain DSM 10664 / DCB-2).